The following is a 198-amino-acid chain: MRLLLASSSPRRRELLTLLHRPFDCEVPEVEELRGANENAGDYVTRLAEEKAQTVAQRQQTPCLVIGSDTLISFKGQVLEKPESYEHFSQMMKQLSGQTHQVLTSVSVCQWNGHKVVARETALVTTQVEFAALSQGEIDAYWATGEPHDKAAGYGIQGYGGKFVKRIEGSYFAVVGLPLYETEQLLRMFEMTGEVDER.

The Proton acceptor role is filled by D69.

This sequence belongs to the Maf family. YhdE subfamily. Requires a divalent metal cation as cofactor.

It localises to the cytoplasm. The catalysed reaction is dTTP + H2O = dTMP + diphosphate + H(+). The enzyme catalyses UTP + H2O = UMP + diphosphate + H(+). Functionally, nucleoside triphosphate pyrophosphatase that hydrolyzes dTTP and UTP. May have a dual role in cell division arrest and in preventing the incorporation of modified nucleotides into cellular nucleic acids. This Idiomarina loihiensis (strain ATCC BAA-735 / DSM 15497 / L2-TR) protein is dTTP/UTP pyrophosphatase.